Reading from the N-terminus, the 157-residue chain is Transcriptional repressor NrdR (157 aa).

Residues 3–34 (CPFCRHPDSRVVDSRTSDDGLSIRRRRQCPEC) fold into a zinc finger. The region spanning 46–136 (LSVIKRNGVV…VYQGFDSLDD (91 aa)) is the ATP-cone domain.

It belongs to the NrdR family. Zn(2+) serves as cofactor.

Functionally, negatively regulates transcription of bacterial ribonucleotide reductase nrd genes and operons by binding to NrdR-boxes. This Clavibacter michiganensis subsp. michiganensis (strain NCPPB 382) protein is Transcriptional repressor NrdR.